The chain runs to 679 residues: Penicillin-binding protein PbpB (679 aa).

The segment at 1–74 is disordered; the sequence is MSRAAPRRAS…STRARRTRQV (74 aa). At 1 to 90 the chain is on the cytoplasmic side; the sequence is MSRAAPRRAS…GASFVFRHRT (90 aa). Over residues 42–54 the composition is skewed to polar residues; that stretch reads ARQAQEATKSRPA. A helical transmembrane segment spans residues 91 to 111; it reads GNAVILVLMLVAATQLFFLQV. Residues 112–679 are Extracellular-facing; the sequence is SHAAGLRAQA…PGPPLVLQAT (568 aa). Serine 386 (acyl-ester intermediate) is an active-site residue.

It belongs to the transpeptidase family. As to quaternary structure, interacts with Wag31. Cleaved by Rip1 in response to oxidative stress (H(2)O(2)), prevented by Wag31. Cleavage probably occurs near residues 102-103.

It localises to the cell membrane. The protein operates within cell wall biogenesis; peptidoglycan biosynthesis. Its function is as follows. Synthesis of cross-linked peptidoglycan from the lipid intermediates. The protein is Penicillin-binding protein PbpB (pbpB) of Mycobacterium tuberculosis (strain ATCC 25618 / H37Rv).